The primary structure comprises 317 residues: MAPAMGNELQHRTVLLEEAVQALVTRADGVYVDGTFGRGGHSRLVLEKLGESGRLIAFDKDPLAIATAQQITDPRFGIVHESFASLRTAMAERGVGRVSGVLLDLGVSSPQVDDPERGFSFRADGPLDMRMDPTRGESAADWLARATVQELTEVIRDYGEERFAFQIAKALVARRAESDRLGPLVSTGELAQIVANVVKTREKGKDPATRTFQAIRIHINQELAELQVVLEAALSLLEQGGRLVVISFHSLEDRIVKRFMQAHASTPAVDRRLPIRAVDLPSPPLKIIGRVFASDAEVAANPRARSAVMRVAERIAP.

S-adenosyl-L-methionine contacts are provided by residues 39–41 (GGH), Asp-59, Phe-83, Asp-104, and Gln-111.

The protein belongs to the methyltransferase superfamily. RsmH family.

The protein localises to the cytoplasm. The catalysed reaction is cytidine(1402) in 16S rRNA + S-adenosyl-L-methionine = N(4)-methylcytidine(1402) in 16S rRNA + S-adenosyl-L-homocysteine + H(+). In terms of biological role, specifically methylates the N4 position of cytidine in position 1402 (C1402) of 16S rRNA. The sequence is that of Ribosomal RNA small subunit methyltransferase H from Paraburkholderia xenovorans (strain LB400).